A 561-amino-acid chain; its full sequence is Carboxylesterase patB (561 aa).

A signal peptide spans 1–19 (MQIINWASLLLVTWETVVA). Residues N38, N69, and N109 are each glycosylated (N-linked (GlcNAc...) asparagine). The active-site Acyl-ester intermediate is the S263. S263 serves as a coordination point for substrate. Residue N316 is glycosylated (N-linked (GlcNAc...) asparagine). E385 acts as the Charge relay system in catalysis. N393, N412, N429, and N496 each carry an N-linked (GlcNAc...) asparagine glycan.

It belongs to the type-B carboxylesterase/lipase family.

It is found in the cytoplasm. Its subcellular location is the cytosol. It carries out the reaction a carboxylic ester + H2O = an alcohol + a carboxylate + H(+). The protein operates within mycotoxin biosynthesis; patulin biosynthesis. Carboxylesterase; part of the gene cluster that mediates the biosynthesis of patulin, an acetate-derived tetraketide mycotoxin produced by several fungal species that shows antimicrobial properties against several bacteria. The function of patB in patulin synthesis has still to be characterized. The pathway begins with the synthesis of 6-methylsalicylic acid by the polyketide synthase (PKS) patK via condensation of acetate and malonate units. The 6-methylsalicylic acid decarboxylase patG then catalyzes the decarboxylation of 6-methylsalicylic acid to yield m-cresol (also known as 3-methylphenol). These first reactions occur in the cytosol. The intermediate m-cresol is then transported into the endoplasmic reticulum where the cytochrome P450 monooxygenase patH converts it to m-hydroxybenzyl alcohol, which is further converted to gentisyl alcohol by the cytochrome P450 monooxygenase patI. The oxidoreductases patJ and patO further convert gentisyl alcohol to isoepoxydon in the vacuole. PatN catalyzes then the transformation of isoepoxydon into phyllostine. The cluster protein patF is responsible for the conversion from phyllostine to neopatulin whereas the alcohol dehydrogenase patD converts neopatulin to E-ascladiol. The steps between isoepoxydon and E-ascladiol occur in the cytosol, and E-ascladiol is probably secreted to the extracellular space by one of the cluster-specific transporters patC or patM. Finally, the secreted patulin synthase patE catalyzes the conversion of E-ascladiol to patulin. This chain is Carboxylesterase patB, found in Penicillium expansum (Blue mold rot fungus).